The primary structure comprises 194 residues: Imidazoleglycerol-phosphate dehydratase (194 aa).

This sequence belongs to the imidazoleglycerol-phosphate dehydratase family.

The protein resides in the cytoplasm. The catalysed reaction is D-erythro-1-(imidazol-4-yl)glycerol 3-phosphate = 3-(imidazol-4-yl)-2-oxopropyl phosphate + H2O. The protein operates within amino-acid biosynthesis; L-histidine biosynthesis; L-histidine from 5-phospho-alpha-D-ribose 1-diphosphate: step 6/9. This is Imidazoleglycerol-phosphate dehydratase from Thermus thermophilus (strain ATCC BAA-163 / DSM 7039 / HB27).